Reading from the N-terminus, the 1062-residue chain is MGARPLTLLRALLLPLLAGAQAAIVFIKEPSSQDALQGRRALLRCEVEAPDPVHVYWLLNGVPVQDTERRFAQGSSLSFAAVDRLQDSGAFQCVARDNVTGEEVRSTNASFNIKWIEAGPVVLKHPASEAEIQPQTQVTLRCHIDGHPRPTYQWFRDGTPLSDDQSTHTVSSRERNLTLRPASPEHSGLYSCCAHNAFGQACSSQNFTLSVADESFARVVLAPQDVVVARNEEAMFHCQFSAQPPPSLQWVFEDETPITNRSRPPHLRRAVVFANGSLLLTQVRPRNAGVYRCIGQGQRGPPIVLEATLHLAEIEDMLPFEPRVFIAGDEERVTCPAPQGLPTPSVWWEHAGVPLPAHGRVHQKGLELVFVTIAESDTGVYTCHASNLAGQRRQDVNITVATVPTWLRKPQDSQLEEGKPGYLHCLTQATPKPTVIWYRNQMLISEDSRFEVSKNGTLRINSVEVYDGTLYRCVSSTPAGSIEAQARVQVLEKLKFTPPPQPQQCMEFDKEATVPCSATGREKPTVKWVRADGSSLPEWVTDNAGTLHFARVTRDDAGNYTCIASNEPQGQIRAHVQLTVAVFITFKVEPERTTVYQGHTALLRCEAQGDPKPLIQWKGKDRILDPTKLGPRMHIFQNGSLVIHDVAPEDSGSYTCIAGNSCNIRHTEAPLLVVDKPVMEDSEGPGSPPPYKMIQTIGLSVGAAVAYIIAVLGLMFYCKKRCKAKRLQKQPEGEEPEMECLNGGPLQNGQPSAEIQEEVALTSLGSGPPATNKRHSAGDRMHFPRASLQPITTLGKSEFGEVFLAKAQGVEEGATETLVLVKSLQSRDEQQQLDFRREVEMFGKLNHANVVRLLGLCREAEPHYMVLEYVDLGDLKQFLRISKNKDEKLKSQPLSTKQKVALCSQVALGMEHLSNNRFVHKDLAARNCLISAQRQVKVSALGLSKDVYNSEYYHFRQAWVPLRWMSPEAVLEGDFSTKSDVWAFGVLMWEVFTHGEMPHGGQADDEVLADLQAGKARLPQPEGCPSKLYRLMQRCWAPNPKDRPSFSEIASTLGDSPADSKQ.

A signal peptide spans 1 to 22; the sequence is MGARPLTLLRALLLPLLAGAQA. 7 Ig-like C2-type domains span residues 23–112, 120–210, 217–309, 301–399, 404–489, 495–578, and 570–672; these read AIVF…ASFN, PVVL…FTLS, ARVV…EATL, PPIV…VNIT, PTWL…ARVQ, KFTP…HVQL, and GQIR…APLL. At 23–696 the chain is on the extracellular side; that stretch reads AIVFIKEPSS…SPPPYKMIQT (674 aa). Cysteine 45 and cysteine 93 form a disulfide bridge. N-linked (GlcNAc...) asparagine glycans are attached at residues asparagine 98, asparagine 108, asparagine 176, asparagine 206, asparagine 260, and asparagine 275. A disulfide bond links cysteine 142 and cysteine 192. 2 cysteine pairs are disulfide-bonded: cysteine 238/cysteine 293 and cysteine 335/cysteine 383. 4 N-linked (GlcNAc...) asparagine glycosylation sites follow: asparagine 397, asparagine 455, asparagine 559, and asparagine 638. Cystine bridges form between cysteine 425–cysteine 473, cysteine 516–cysteine 562, and cysteine 605–cysteine 656. A helical transmembrane segment spans residues 697 to 717; that stretch reads IGLSVGAAVAYIIAVLGLMFY. The Cytoplasmic segment spans residues 718 to 1062; sequence CKKRCKAKRL…LGDSPADSKQ (345 aa). Disordered stretches follow at residues 728 to 750 and 1039 to 1062; these read QKQP…QNGQ and NPKD…DSKQ. Positions 786–1062 are interaction with CTNNB1; sequence ASLQPITTLG…LGDSPADSKQ (277 aa). The 271-residue stretch at 788–1058 folds into the Protein kinase; inactive domain; the sequence is LQPITTLGKS…IASTLGDSPA (271 aa). Residue serine 1056 is modified to Phosphoserine.

This sequence belongs to the protein kinase superfamily. Tyr protein kinase family. Insulin receptor subfamily. In terms of assembly, interacts with CTNNB1. In terms of processing, MMP14 cleaves PTK7 between Pro-613 and Leu-614 generating an N-terminal soluble (70 kDa) fragment and a membrane C-terminal (50 kDa) fragment. Proteolysis by MMP14 regulates PTK7 function in non-canonical Wnt signaling pathway. In terms of tissue distribution, expressed at high levels in lung and un-pregnant uterus among adult tissues, and in the tail, limbs, somites, gut and craniofacial regions among embryonic tissues.

The protein localises to the membrane. The protein resides in the cell junction. Inactive tyrosine kinase involved in Wnt signaling pathway. Component of both the non-canonical (also known as the Wnt/planar cell polarity signaling) and the canonical Wnt signaling pathway. Functions in cell adhesion, cell migration, cell polarity, proliferation, actin cytoskeleton reorganization and apoptosis. Has a role in embryogenesis, epithelial tissue organization and angiogenesis. This Mus musculus (Mouse) protein is Inactive tyrosine-protein kinase 7 (Ptk7).